Reading from the N-terminus, the 280-residue chain is Protein MGF 505-3R (280 aa).

The protein belongs to the asfivirus MGF 505 family.

Functionally, plays a role in virus cell tropism, and may be required for efficient virus replication in macrophages. In African swine fever virus (isolate Warthog/Namibia/Wart80/1980) (ASFV), this protein is Protein MGF 505-3R.